The primary structure comprises 197 residues: Glycerol-3-phosphate acyltransferase (197 aa).

A run of 4 helical transmembrane segments spans residues 1–21 (MTALILLLAYLLGSIPFGLLV), 69–89 (LPMLFSVPVHPLLAGAIAVVG), 110–130 (VMLFYSPLFFLSLIAVFLVVL), and 152–172 (VFFTDDIPLTVAVLLLASFIF).

The protein belongs to the PlsY family. In terms of assembly, probably interacts with PlsX.

The protein resides in the cell membrane. It carries out the reaction an acyl phosphate + sn-glycerol 3-phosphate = a 1-acyl-sn-glycero-3-phosphate + phosphate. It participates in lipid metabolism; phospholipid metabolism. In terms of biological role, catalyzes the transfer of an acyl group from acyl-phosphate (acyl-PO(4)) to glycerol-3-phosphate (G3P) to form lysophosphatidic acid (LPA). This enzyme utilizes acyl-phosphate as fatty acyl donor, but not acyl-CoA or acyl-ACP. The sequence is that of Glycerol-3-phosphate acyltransferase from Geobacillus kaustophilus (strain HTA426).